Consider the following 410-residue polypeptide: DNA replication and repair protein RecF (410 aa).

Gly-30–Thr-37 lines the ATP pocket.

It belongs to the RecF family.

It is found in the cytoplasm. Functionally, the RecF protein is involved in DNA metabolism; it is required for DNA replication and normal SOS inducibility. RecF binds preferentially to single-stranded, linear DNA. It also seems to bind ATP. This Rhodococcus opacus (strain B4) protein is DNA replication and repair protein RecF.